A 126-amino-acid chain; its full sequence is Aspartate 1-decarboxylase (126 aa).

The Schiff-base intermediate with substrate; via pyruvic acid role is filled by Ser25. A Pyruvic acid (Ser) modification is found at Ser25. A substrate-binding site is contributed by Thr57. Residue Tyr58 is the Proton donor of the active site. 73–75 (GAA) lines the substrate pocket.

It belongs to the PanD family. Heterooctamer of four alpha and four beta subunits. Pyruvate serves as cofactor. In terms of processing, is synthesized initially as an inactive proenzyme, which is activated by self-cleavage at a specific serine bond to produce a beta-subunit with a hydroxyl group at its C-terminus and an alpha-subunit with a pyruvoyl group at its N-terminus.

It localises to the cytoplasm. It carries out the reaction L-aspartate + H(+) = beta-alanine + CO2. It functions in the pathway cofactor biosynthesis; (R)-pantothenate biosynthesis; beta-alanine from L-aspartate: step 1/1. In terms of biological role, catalyzes the pyruvoyl-dependent decarboxylation of aspartate to produce beta-alanine. This Methylobacillus flagellatus (strain ATCC 51484 / DSM 6875 / VKM B-1610 / KT) protein is Aspartate 1-decarboxylase.